We begin with the raw amino-acid sequence, 302 residues long: 4-hydroxy-tetrahydrodipicolinate synthase (302 aa).

Thr-57 is a pyruvate binding site. The active-site Proton donor/acceptor is the Tyr-145. The Schiff-base intermediate with substrate role is filled by Lys-173. Ile-213 lines the pyruvate pocket.

Belongs to the DapA family. In terms of assembly, homotetramer; dimer of dimers.

The protein localises to the cytoplasm. It carries out the reaction L-aspartate 4-semialdehyde + pyruvate = (2S,4S)-4-hydroxy-2,3,4,5-tetrahydrodipicolinate + H2O + H(+). Its pathway is amino-acid biosynthesis; L-lysine biosynthesis via DAP pathway; (S)-tetrahydrodipicolinate from L-aspartate: step 3/4. Its function is as follows. Catalyzes the condensation of (S)-aspartate-beta-semialdehyde [(S)-ASA] and pyruvate to 4-hydroxy-tetrahydrodipicolinate (HTPA). The polypeptide is 4-hydroxy-tetrahydrodipicolinate synthase (Mycolicibacterium gilvum (strain PYR-GCK) (Mycobacterium gilvum (strain PYR-GCK))).